We begin with the raw amino-acid sequence, 449 residues long: MKERKYFGTDGVRGLVGEHPINPEFAMKLGWAAGRVLSENGTKKVMIGKDTRISGYMLETALQAGLIAAGIDVVLLGPMPTPAIAYLAQTFRAEAGIVISASHNPYYDNGIKFFNCRGLKLDDKVELEIEAMLDEPMTCVESDKLGKASRLTSADGRYIEFCKSQFPQSLSLEGLKIVLDCANGATYHIAPSVMRELGANIITHACEPNGVNINHECGATHVDTLKRKVLEHNADVGIAYDGDGDRVMMVDHNGRVFDGDDLVYIIACQAAQDDNLGGGVVGTVMSNMGLENALKAKGIEFARSKVGDRYVMELLQQKGWTIGGESSGHVLNLDLISTGDGIISSLQVLAAMVAQNKTLQDLGTGFTKYPMKMINVRYTPGTDPTKAPAVLAAVAEVEQTLGEKGRVLLRKSGTEPVVRVMVEAEQEKLVIDSAEKIAAVVESMSKQTD.

Ser-102 functions as the Phosphoserine intermediate in the catalytic mechanism. 4 residues coordinate Mg(2+): Ser-102, Asp-241, Asp-243, and Asp-245. Ser-102 carries the post-translational modification Phosphoserine.

It belongs to the phosphohexose mutase family. The cofactor is Mg(2+). Activated by phosphorylation.

It catalyses the reaction alpha-D-glucosamine 1-phosphate = D-glucosamine 6-phosphate. In terms of biological role, catalyzes the conversion of glucosamine-6-phosphate to glucosamine-1-phosphate. This is Phosphoglucosamine mutase from Pseudoalteromonas translucida (strain TAC 125).